The following is a 492-amino-acid chain: N-succinylglutamate 5-semialdehyde dehydrogenase (492 aa).

An NAD(+)-binding site is contributed by 220 to 225; it reads GSASTG. Residues glutamate 243 and cysteine 277 contribute to the active site.

Belongs to the aldehyde dehydrogenase family. AstD subfamily.

The catalysed reaction is N-succinyl-L-glutamate 5-semialdehyde + NAD(+) + H2O = N-succinyl-L-glutamate + NADH + 2 H(+). It functions in the pathway amino-acid degradation; L-arginine degradation via AST pathway; L-glutamate and succinate from L-arginine: step 4/5. Catalyzes the NAD-dependent reduction of succinylglutamate semialdehyde into succinylglutamate. The polypeptide is N-succinylglutamate 5-semialdehyde dehydrogenase (Salmonella schwarzengrund (strain CVM19633)).